The chain runs to 261 residues: 3-deoxy-manno-octulosonate cytidylyltransferase 1 (261 aa).

This sequence belongs to the KdsB family.

It localises to the cytoplasm. The catalysed reaction is 3-deoxy-alpha-D-manno-oct-2-ulosonate + CTP = CMP-3-deoxy-beta-D-manno-octulosonate + diphosphate. It functions in the pathway nucleotide-sugar biosynthesis; CMP-3-deoxy-D-manno-octulosonate biosynthesis; CMP-3-deoxy-D-manno-octulosonate from 3-deoxy-D-manno-octulosonate and CTP: step 1/1. The protein operates within bacterial outer membrane biogenesis; lipopolysaccharide biosynthesis. In terms of biological role, activates KDO (a required 8-carbon sugar) for incorporation into bacterial lipopolysaccharide in Gram-negative bacteria. In Burkholderia lata (strain ATCC 17760 / DSM 23089 / LMG 22485 / NCIMB 9086 / R18194 / 383), this protein is 3-deoxy-manno-octulosonate cytidylyltransferase 1.